Reading from the N-terminus, the 92-residue chain is UPF0250 protein Avin_08440 (92 aa).

It belongs to the UPF0250 family.

The sequence is that of UPF0250 protein Avin_08440 from Azotobacter vinelandii (strain DJ / ATCC BAA-1303).